Consider the following 311-residue polypeptide: Triacylglycerol lipase (311 aa).

The first 26 residues, 1 to 26, serve as a signal peptide directing secretion; the sequence is MKKKSLLPLGLAIGLASLAASPLIQA. The 246-residue stretch at 35–280 folds into the AB hydrolase-1 domain; the sequence is PIVLAHGMLG…DNYRMNHLDE (246 aa). Methionine 42 provides a ligand contact to substrate. The Nucleophile role is filled by serine 108. Histidine 109 serves as a coordination point for substrate. Cysteines 209 and 261 form a disulfide. Aspartate 235 contributes to the Ca(2+) binding site. Catalysis depends on charge relay system residues aspartate 255 and histidine 277. Ca(2+) is bound by residues aspartate 279, glutamine 283, and leucine 287.

It belongs to the AB hydrolase superfamily. Pseudomonas lipase family. In terms of assembly, monomer. Ca(2+) serves as cofactor.

The protein localises to the secreted. The catalysed reaction is a triacylglycerol + H2O = a diacylglycerol + a fatty acid + H(+). Na(+) increases lipase activity. Inhibited by diethyl p-nitrophenyl phosphate and 3,4-dichloroisocoumarin (DCI). In terms of biological role, catalyzes the hydrolysis of triacylglycerol. It also exhibits some esterase activity with p-nitrophenyl acetate and Tween 80 as substrates, however the lipase activity is approximately eight times the esterase activity. It shows a marked specificity for the 1,3-oleyl residues of triolein. In Pseudomonas aeruginosa (strain ATCC 15692 / DSM 22644 / CIP 104116 / JCM 14847 / LMG 12228 / 1C / PRS 101 / PAO1), this protein is Triacylglycerol lipase.